A 147-amino-acid polypeptide reads, in one-letter code: Delta-latroinsectotoxin-Lhe1a (147 aa).

ANK repeat units follow at residues 57–59, 66–78, 79–96, and 98–125; these read VSI, NNWT…IYFK, KNPA…DIEA, and TSIM…TLDE.

This sequence belongs to the cationic peptide 01 (latrotoxin) family. 04 (delta-latroinsectotoxin) subfamily. In terms of assembly, homotetramer in membrane. Expressed by the venom gland.

It is found in the secreted. The protein resides in the target cell membrane. Functionally, insecticidal presynaptic neurotoxin that induces massive neurotransmitter release at insect (but not vertebrate) neuromuscular junctions. Native toxin forms cation-permeable pores (with high permeability to calcium) in lipid membranes locust muscle membrane and artificial lipid bilayers. May bind to insect neurexin-1 homolog, insect adhesion G protein-coupled receptor L1 homolog, and insect receptor-type tyrosine-protein phosphatase S homolog, and induces neurotransmitter exocytosis both by forming tetrameric pores in membranes and signaling via G protein-coupled receptor. Oligomerization is a process independent of divalent cations. The sequence is that of Delta-latroinsectotoxin-Lhe1a from Latrodectus hesperus (Western black widow spider).